Reading from the N-terminus, the 231-residue chain is Phosphatidylserine decarboxylase proenzyme (231 aa).

Catalysis depends on Ser-200, which acts as the Schiff-base intermediate with substrate; via pyruvic acid. Pyruvic acid (Ser); by autocatalysis is present on Ser-200.

This sequence belongs to the phosphatidylserine decarboxylase family. PSD-A subfamily. As to quaternary structure, heterodimer of a large membrane-associated beta subunit and a small pyruvoyl-containing alpha subunit. It depends on pyruvate as a cofactor. In terms of processing, is synthesized initially as an inactive proenzyme. Formation of the active enzyme involves a self-maturation process in which the active site pyruvoyl group is generated from an internal serine residue via an autocatalytic post-translational modification. Two non-identical subunits are generated from the proenzyme in this reaction, and the pyruvate is formed at the N-terminus of the alpha chain, which is derived from the carboxyl end of the proenzyme. The post-translation cleavage follows an unusual pathway, termed non-hydrolytic serinolysis, in which the side chain hydroxyl group of the serine supplies its oxygen atom to form the C-terminus of the beta chain, while the remainder of the serine residue undergoes an oxidative deamination to produce ammonia and the pyruvoyl prosthetic group on the alpha chain.

It is found in the cell membrane. The catalysed reaction is a 1,2-diacyl-sn-glycero-3-phospho-L-serine + H(+) = a 1,2-diacyl-sn-glycero-3-phosphoethanolamine + CO2. Its pathway is phospholipid metabolism; phosphatidylethanolamine biosynthesis; phosphatidylethanolamine from CDP-diacylglycerol: step 2/2. In terms of biological role, catalyzes the formation of phosphatidylethanolamine (PtdEtn) from phosphatidylserine (PtdSer). The polypeptide is Phosphatidylserine decarboxylase proenzyme (Mycobacterium tuberculosis (strain ATCC 25177 / H37Ra)).